Here is a 175-residue protein sequence, read N- to C-terminus: Catabolic 3-dehydroquinase (175 aa).

Y23 acts as the Proton acceptor in catalysis. The substrate site is built by N74, H80, and D87. H100 serves as the catalytic Proton donor. Residues 101–102 (IS) and R111 contribute to the substrate site.

The protein belongs to the type-II 3-dehydroquinase family. Homododecamer. Adopts a ring-like structure, composed of an arrangement of two hexameric rings stacked on top of one another.

The catalysed reaction is 3-dehydroquinate = 3-dehydroshikimate + H2O. It participates in aromatic compound metabolism; 3,4-dihydroxybenzoate biosynthesis; 3,4-dihydroxybenzoate from 3-dehydroquinate: step 1/2. In terms of biological role, is involved in the catabolism of quinate. Allows the utilization of quinate as carbon source via the beta-ketoadipate pathway. In Talaromyces marneffei (strain ATCC 18224 / CBS 334.59 / QM 7333) (Penicillium marneffei), this protein is Catabolic 3-dehydroquinase.